The chain runs to 101 residues: Urease subunit gamma (101 aa).

Belongs to the urease gamma subunit family. As to quaternary structure, heterotrimer of UreA (gamma), UreB (beta) and UreC (alpha) subunits. Three heterotrimers associate to form the active enzyme.

The protein resides in the cytoplasm. It catalyses the reaction urea + 2 H2O + H(+) = hydrogencarbonate + 2 NH4(+). Its pathway is nitrogen metabolism; urea degradation; CO(2) and NH(3) from urea (urease route): step 1/1. This Ureaplasma urealyticum (Ureaplasma urealyticum biotype 2) protein is Urease subunit gamma.